The sequence spans 115 residues: Chaperone protein PrsD (115 aa).

It belongs to the periplasmic pilus chaperone family.

Its subcellular location is the periplasm. Mediates assembly of pili by forming soluble multimeric complexes with pili subunits as an intermediate step in the assembly process. The protein is Chaperone protein PrsD (prsD) of Escherichia coli.